A 412-amino-acid chain; its full sequence is Gamma-glutamyl phosphate reductase (412 aa).

It belongs to the gamma-glutamyl phosphate reductase family.

The protein resides in the cytoplasm. The enzyme catalyses L-glutamate 5-semialdehyde + phosphate + NADP(+) = L-glutamyl 5-phosphate + NADPH + H(+). Its pathway is amino-acid biosynthesis; L-proline biosynthesis; L-glutamate 5-semialdehyde from L-glutamate: step 2/2. Catalyzes the NADPH-dependent reduction of L-glutamate 5-phosphate into L-glutamate 5-semialdehyde and phosphate. The product spontaneously undergoes cyclization to form 1-pyrroline-5-carboxylate. The protein is Gamma-glutamyl phosphate reductase of Actinobacillus pleuropneumoniae serotype 7 (strain AP76).